Here is a 232-residue protein sequence, read N- to C-terminus: Ribonuclease 3 (232 aa).

One can recognise an RNase III domain in the interval 5-134 (NDAISKIIDY…LIGAIYIDGG (130 aa)). Residue glutamate 47 participates in Mg(2+) binding. The active site involves aspartate 51. The Mg(2+) site is built by asparagine 120 and glutamate 123. The active site involves glutamate 123. The region spanning 159–228 (DPKTSLQEWT…AELMLEKIGK (70 aa)) is the DRBM domain.

This sequence belongs to the ribonuclease III family. As to quaternary structure, homodimer. Requires Mg(2+) as cofactor.

Its subcellular location is the cytoplasm. It carries out the reaction Endonucleolytic cleavage to 5'-phosphomonoester.. Functionally, digests double-stranded RNA. Involved in the processing of primary rRNA transcript to yield the immediate precursors to the large and small rRNAs (23S and 16S). Processes some mRNAs, and tRNAs when they are encoded in the rRNA operon. Processes pre-crRNA and tracrRNA of type II CRISPR loci if present in the organism. The protein is Ribonuclease 3 of Wolbachia pipientis wMel.